The following is a 2283-amino-acid chain: Serine-rich adhesin for platelets (2283 aa).

An N-terminal signal peptide occupies residues 1 to 89 (MSKRQKAFHD…VNMLHDQQAF (89 aa)). The tract at residues 90 to 230 (AASDAPLTSE…KTSTTSTSTA (141 aa)) is serine-rich repeat region 1, SRR1. Polar residues predominate over residues 100–111 (LNTQSETVGNQN). Disordered stretches follow at residues 100–230 (LNTQ…TSTA), 691–721 (NSGN…GTPT), and 751–2255 (NSMS…GLLG). Residues 112 to 128 (STTIEASTSTADSTSVT) are compositionally biased toward low complexity. The span at 129–140 (KNSSSVQTSNSD) shows a compositional bias: polar residues. Low complexity predominate over residues 149-229 (NVTSTTNSTS…NKTSTTSTST (81 aa)). Residues 231-751 (PVKLRTFSRL…TTFKYEVTRN (521 aa)) are non-repeat region (NRR). 3 stretches are compositionally biased toward low complexity: residues 752–1323 (SMSD…SDSI), 1330–1894 (SLSA…QSSS), and 1901–2225 (DSMS…SATS). Positions 752 to 2244 (SMSDSVSTSG…AQSEERLPDT (1493 aa)) are serine-rich repeat region 2, SRR2. The short motif at 2241–2245 (LPDTG) is the LPXTG sorting signal element. Residue Thr-2244 is modified to Pentaglycyl murein peptidoglycan amidated threonine. A propeptide spans 2245–2283 (GESIKQNGLLGGIMTLLVGLGLMKRKKKKDENDQDDSQA) (removed by sortase).

The protein belongs to the serine-rich repeat protein (SRRP) family. In terms of processing, proteolytically cleaved by a metalloprotease. Glycosylated. It is probable that most of the Ser residues in SSR1 and SSR2 are O-GlcNAcylated. Sequential glycosylation by sugar transferases are able to generate complex sugar polymorphisms.

It localises to the secreted. The protein resides in the cell wall. In terms of biological role, mediates binding to human platelets, possibly through a receptor-ligand interaction. Probably associated with virulence in endovascular infection. The chain is Serine-rich adhesin for platelets (sraP) from Staphylococcus aureus.